The following is a 211-amino-acid chain: Protein-L-isoaspartate O-methyltransferase (211 aa).

Ser60 is a catalytic residue.

It belongs to the methyltransferase superfamily. L-isoaspartyl/D-aspartyl protein methyltransferase family.

The protein resides in the cytoplasm. The catalysed reaction is [protein]-L-isoaspartate + S-adenosyl-L-methionine = [protein]-L-isoaspartate alpha-methyl ester + S-adenosyl-L-homocysteine. Functionally, catalyzes the methyl esterification of L-isoaspartyl residues in peptides and proteins that result from spontaneous decomposition of normal L-aspartyl and L-asparaginyl residues. It plays a role in the repair and/or degradation of damaged proteins. The chain is Protein-L-isoaspartate O-methyltransferase from Alteromonas mediterranea (strain DSM 17117 / CIP 110805 / LMG 28347 / Deep ecotype).